The primary structure comprises 288 residues: Homoserine kinase (288 aa).

79–89 (PLARGLGSSSS) is a binding site for ATP.

This sequence belongs to the GHMP kinase family. Homoserine kinase subfamily.

It localises to the cytoplasm. The enzyme catalyses L-homoserine + ATP = O-phospho-L-homoserine + ADP + H(+). It participates in amino-acid biosynthesis; L-threonine biosynthesis; L-threonine from L-aspartate: step 4/5. In terms of biological role, catalyzes the ATP-dependent phosphorylation of L-homoserine to L-homoserine phosphate. This Streptococcus gordonii (strain Challis / ATCC 35105 / BCRC 15272 / CH1 / DL1 / V288) protein is Homoserine kinase.